We begin with the raw amino-acid sequence, 54 residues long: Large ribosomal subunit protein bL33A (54 aa).

It belongs to the bacterial ribosomal protein bL33 family.

The chain is Large ribosomal subunit protein bL33A from Mycolicibacterium paratuberculosis (strain ATCC BAA-968 / K-10) (Mycobacterium paratuberculosis).